A 420-amino-acid polypeptide reads, in one-letter code: Calreticulin (420 aa).

A signal peptide spans 1 to 25 (MAIRKGSSYAVAALLALASVAAVAG). Asn-57 carries an N-linked (GlcNAc...) asparagine glycan. Residues Tyr-115, Lys-117, Tyr-134, and Asp-141 each contribute to the an alpha-D-glucoside site. Tandem repeats lie at residues 197 to 208 (KHTGSIYEHWDI), 216 to 227 (DPEAKKPEDWDD), 233 to 244 (DPEDKKPEGYDD), 251 to 262 (DPDAKKPEDWDD), 266 to 276 (GEWTAPTIPNP), 280 to 290 (GPWKQKKIKNP), and 294 to 304 (GKWKAPMIDNP). A 4 X approximate repeats region spans residues 197-262 (KHTGSIYEHW…DAKKPEDWDD (66 aa)). Positions 213 to 258 (KIKDPEAKKPEDWDDKEYIPDPEDKKPEGYDDIPKEIPDPDAKKPE) are enriched in basic and acidic residues. Positions 213-285 (KIKDPEAKKP…PEYKGPWKQK (73 aa)) are disordered. The tract at residues 266–304 (GEWTAPTIPNPEYKGPWKQKKIKNPNYQGKWKAPMIDNP) is 3 X approximate repeats. Glu-324 contributes to the an alpha-D-glucoside binding site. A compositionally biased stretch (basic and acidic residues) spans 355–381 (GKHKEAEKAAFDEAEKKKEEEDAAKGG). The tract at residues 355-420 (GKHKEAEKAA…DSDDEKHDEL (66 aa)) is disordered. Over residues 382–402 (DDEDDDLEDEEDDEKADEDKA) the composition is skewed to acidic residues. Basic and acidic residues predominate over residues 403–420 (DSDAEDGKDSDDEKHDEL). Residues 417–420 (HDEL) carry the Prevents secretion from ER motif.

Belongs to the calreticulin family.

The protein localises to the endoplasmic reticulum lumen. Its function is as follows. Molecular calcium-binding chaperone promoting folding, oligomeric assembly and quality control in the ER via the calreticulin/calnexin cycle. This lectin may interact transiently with almost all of the monoglucosylated glycoproteins that are synthesized in the ER. This Zea mays (Maize) protein is Calreticulin (CRT).